The sequence spans 270 residues: Cell surface glycoprotein CD200 receptor 5 (270 aa).

The N-terminal stretch at 1–25 (MHALGRTPALTLLIFINIFVSGSRC) is a signal peptide. Over 26 to 241 (TDKNQTIQND…STTTTTSLLT (216 aa)) the chain is Extracellular. Positions 39–145 (PLTQVNTTVS…GNFGRVYDLQ (107 aa)) constitute an Ig-like V-type domain. Asn44 is a glycosylation site (N-linked (GlcNAc...) asparagine). 2 cysteine pairs are disulfide-bonded: Cys59–Cys129 and Cys164–Cys213. Residues 134-229 (PEGNFGRVYD…GNKSLFIELN (96 aa)) form the Ig-like C2-type domain. N-linked (GlcNAc...) asparagine glycans are attached at residues Asn192 and Asn221. A helical membrane pass occupies residues 242–262 (ILYVKMVLLGIILLHVGFAFF). The Cytoplasmic segment spans residues 263–270 (QKRNVIRT).

It belongs to the CD200R family.

Its subcellular location is the membrane. Its function is as follows. May not be a receptor for the CD200/OX2 cell surface glycoprotein. This is Cell surface glycoprotein CD200 receptor 5 (Cd200r5) from Mus musculus (Mouse).